Reading from the N-terminus, the 258-residue chain is Proteasome subunit beta type-1 (258 aa).

It belongs to the peptidase T1B family. As to quaternary structure, the 26S proteasome consists of a 20S proteasome core and two 19S regulatory subunits. The 20S proteasome core is composed of 28 subunits that are arranged in four stacked rings, resulting in a barrel-shaped structure. The two end rings are each formed by seven alpha subunits, and the two central rings are each formed by seven beta subunits. The catalytic chamber with the active sites is on the inside of the barrel.

It is found in the cytoplasm. The protein resides in the nucleus. Functionally, non-catalytic component of the proteasome, a multicatalytic proteinase complex which is characterized by its ability to cleave peptides with Arg, Phe, Tyr, Leu, and Glu adjacent to the leaving group at neutral or slightly basic pH. The proteasome has an ATP-dependent proteolytic activity. In Caenorhabditis elegans, this protein is Proteasome subunit beta type-1 (pbs-6).